Reading from the N-terminus, the 197-residue chain is Imidazoleglycerol-phosphate dehydratase (197 aa).

This sequence belongs to the imidazoleglycerol-phosphate dehydratase family.

The protein resides in the cytoplasm. The catalysed reaction is D-erythro-1-(imidazol-4-yl)glycerol 3-phosphate = 3-(imidazol-4-yl)-2-oxopropyl phosphate + H2O. The protein operates within amino-acid biosynthesis; L-histidine biosynthesis; L-histidine from 5-phospho-alpha-D-ribose 1-diphosphate: step 6/9. In Laribacter hongkongensis (strain HLHK9), this protein is Imidazoleglycerol-phosphate dehydratase.